The chain runs to 123 residues: Chaperone protein SycN (123 aa).

Interacts with YscB to form a complex which specifically binds to YopN.

It is found in the cytoplasm. The protein resides in the cell inner membrane. Functionally, functions as a specific chaperone for YopN. It could facilitate the secretion and the subsequent translocation of YopN. The polypeptide is Chaperone protein SycN (sycN) (Yersinia pseudotuberculosis serotype I (strain IP32953)).